The following is a 608-amino-acid chain: Malonate--CoA ligase (608 aa).

This sequence belongs to the ATP-dependent AMP-binding enzyme family. As to expression, expressed in flowers.

The protein localises to the cytoplasm. It localises to the nucleus. It catalyses the reaction malonate + ATP + CoA = malonyl-CoA + AMP + diphosphate. In terms of biological role, malonate--CoA ligase that catalyzes the formation of malonyl-CoA directly from malonate and CoA. May be required for the detoxification of malonate. This Arabidopsis thaliana (Mouse-ear cress) protein is Malonate--CoA ligase (AAE13).